The primary structure comprises 227 residues: 3,4-dihydroxy-2-butanone 4-phosphate synthase (227 aa).

D-ribulose 5-phosphate is bound by residues 45–46 (RE), Asp50, 158–162 (RRGHT), and Glu182. A Mg(2+)-binding site is contributed by Glu46. His161 lines the Mg(2+) pocket.

It belongs to the DHBP synthase family. As to quaternary structure, homodimer. It depends on Mg(2+) as a cofactor. Mn(2+) is required as a cofactor.

It carries out the reaction D-ribulose 5-phosphate = (2S)-2-hydroxy-3-oxobutyl phosphate + formate + H(+). It functions in the pathway cofactor biosynthesis; riboflavin biosynthesis; 2-hydroxy-3-oxobutyl phosphate from D-ribulose 5-phosphate: step 1/1. Catalyzes the conversion of D-ribulose 5-phosphate to formate and 3,4-dihydroxy-2-butanone 4-phosphate. The sequence is that of 3,4-dihydroxy-2-butanone 4-phosphate synthase from Ralstonia nicotianae (strain ATCC BAA-1114 / GMI1000) (Ralstonia solanacearum).